Consider the following 218-residue polypeptide: Tegument protein UL51 homolog (218 aa).

Cys11 carries the S-palmitoyl cysteine; by host lipid modification. Residues 199 to 218 (APPPVVRQPEHSGPTELALT) form a disordered region.

This sequence belongs to the herpesviridae UL51 family. Homodimer. Interacts with BBRF2; the BBRF2-BSRF1 complexes oligomerize which might play a role in tethering the viral nucleocapsids to the host Golgi membrane during secondary envelopment. Interacts with BGLF3.5. Interacts with BALF1. Interacts with glycoprotein gB. Interacts with glycoprotein heterodimer gH/gL. In terms of processing, phosphorylated. Post-translationally, palmitoylation is necessary for Golgi localization.

It localises to the host cytoplasm. It is found in the virion. The protein localises to the host Golgi apparatus. Functionally, plays several roles during the time course of infection, including egress of virus particles from the perinuclear space and secondary envelopment of cytoplasmic capsids that bud into specific trans-Golgi network (TGN)-derived membranes. This chain is Tegument protein UL51 homolog, found in Homo sapiens (Human).